A 558-amino-acid polypeptide reads, in one-letter code: Phosphatidylserine lipase ABHD16A (558 aa).

Transmembrane regions (helical) follow at residues 60 to 80 (ILAL…FAFF) and 93 to 113 (VVPF…VACL). Topologically, residues 114–558 (RGIGRWTNPQ…AQHFQMPWHL (445 aa)) are cytoplasmic. The AB hydrolase-1 domain maps to 281–406 (LVICCEGNAG…ALVTRTVRQH (126 aa)). Active-site charge relay system residues include S355, D430, and H507.

The protein belongs to the AB hydrolase superfamily. ABHD16 family.

It is found in the membrane. It carries out the reaction 1-heptadecanoyl-2-(5Z,8Z,11Z,14Z-eicosatetraenoyl)-sn-glycero-3-phosphoserine + H2O = 1-heptadecanoyl-sn-glycero-3-phosphoserine + (5Z,8Z,11Z,14Z)-eicosatetraenoate + H(+). It catalyses the reaction 1-hexadecanoyl-2-(9Z-octadecenoyl)-sn-glycero-3-phospho-L-serine + H2O = 1-hexadecanoyl-sn-glycero-3-phospho-L-serine + (9Z)-octadecenoate + H(+). The catalysed reaction is 1-octadecanoyl-2-(9Z,12Z-octadecadienoyl)-sn-glycero-3-phosphoserine + H2O = 1-octadecanoyl-sn-glycero-3-phosphoserine + (9Z,12Z)-octadecadienoate + H(+). The enzyme catalyses 1-heptadecanoyl-2-(5Z,8Z,11Z,14Z-eicosatetraenoyl)-sn-glycero-3-phosphocholine + H2O = 1-heptadecanoyl-sn-glycero-3-phosphocholine + (5Z,8Z,11Z,14Z)-eicosatetraenoate + H(+). It carries out the reaction 1-hexadecanoyl-2-(9Z-octadecenoyl)-sn-glycero-3-phosphoglycerol + H2O = 1-hexadecanoyl-sn-glycero-3-phosphoglycerol + (9Z)-octadecenoate + H(+). It catalyses the reaction 1-hexadecanoyl-2-(9Z-octadecenoyl)-sn-glycero-3-phospho-(1D-myo-inositol) + H2O = 1-hexadecanoyl-sn-glycero-3-phospho-(1D-myo-inositol) + (9Z)-octadecenoate + H(+). The catalysed reaction is 1-heptadecanoyl-2-(5Z,8Z,11Z,14Z-eicosatetraenoyl)-sn-glycero-3-phosphoethanolamine + H2O = 1-heptadecanoyl-sn-glycero-3-phosphoethanolamine + (5Z,8Z,11Z,14Z)-eicosatetraenoate + H(+). The enzyme catalyses 1-hexadecanoyl-2-(9Z-octadecenoyl)-sn-glycero-3-phospho-(1'-sn-glycerol) + H2O = 1-hexadecanoyl-sn-glycero-3-phospho-(1'-sn-glycerol) + (9Z)-octadecenoate + H(+). It carries out the reaction Hydrolyzes glycerol monoesters of long-chain fatty acids.. It catalyses the reaction 1-tetradecanoylglycerol + H2O = tetradecanoate + glycerol + H(+). The catalysed reaction is 2-hexadecanoylglycerol + H2O = glycerol + hexadecanoate + H(+). The enzyme catalyses 1-(9Z-octadecenoyl)-glycerol + H2O = glycerol + (9Z)-octadecenoate + H(+). It carries out the reaction 2-(9Z-octadecenoyl)-glycerol + H2O = glycerol + (9Z)-octadecenoate + H(+). It catalyses the reaction 2-(9Z,12Z-octadecadienoyl)-glycerol + H2O = (9Z,12Z)-octadecadienoate + glycerol + H(+). The catalysed reaction is 1-(5Z,8Z,11Z,14Z-eicosatetraenoyl)-glycerol + H2O = glycerol + (5Z,8Z,11Z,14Z)-eicosatetraenoate + H(+). The enzyme catalyses 2-(5Z,8Z,11Z,14Z-eicosatetraenoyl)-glycerol + H2O = glycerol + (5Z,8Z,11Z,14Z)-eicosatetraenoate + H(+). It carries out the reaction prostaglandin D2-1-glycerol ester + H2O = prostaglandin D2 + glycerol + H(+). It catalyses the reaction 2-glyceryl-15-deoxy-Delta(12,14)-prostaglandin J2 + H2O = 15-deoxy-Delta(12,14)-prostaglandin J2 + glycerol + H(+). The catalysed reaction is 1-(9Z,12Z-octadecadienoyl)-glycerol + H2O = (9Z,12Z)-octadecadienoate + glycerol + H(+). With respect to regulation, specifically inhibited by alpha-alkylidene-beta-lactone KC01 ((Z)-6-(2-Oxo-4-tridecyloxetan-3-ylidene)hexanamide). Functionally, phosphatidylserine (PS) lipase that mediates the hydrolysis of phosphatidylserine to generate lysophosphatidylserine (LPS). LPS constitutes a class of signaling lipids that regulates immunological and neurological processes. Has no activity towards diacylglycerol, triacylglycerol or lysophosphatidylserine lipase. Also has monoacylglycerol lipase activity, with preference for 1-(9Z,12Z-octadecadienoyl)-glycerol (1-LG) and 2-glyceryl-15-deoxy-Delta(12,14)-prostaglandin J2 (15d-PGJ(2)-G). The chain is Phosphatidylserine lipase ABHD16A from Mus musculus (Mouse).